The following is a 244-amino-acid chain: MNIDLNADVGEGCASDSELLTLVSSANIACGFHAGDAQTMLTCVREALKNGVAFGAHPSFPDRDNFGRTAMVLPPETVYAQTLYQIGALGAIVQAQGGVMRHVKPHGMLYNQAAKDPHLAQAIAKAVHDYDPSLILVGLAGSELIRAGERHRLVTRQEVFADRGYQADGSLVPRMQPGALIHDEEQALAQTLDMVQAGRVKSVTGVWTTVTAQTVCIHGDGEYALAFARRLRAAFNARNIHVIA.

It belongs to the LamB/PxpA family. As to quaternary structure, forms a complex composed of PxpA, PxpB and PxpC.

The catalysed reaction is 5-oxo-L-proline + ATP + 2 H2O = L-glutamate + ADP + phosphate + H(+). Its function is as follows. Catalyzes the cleavage of 5-oxoproline to form L-glutamate coupled to the hydrolysis of ATP to ADP and inorganic phosphate. The polypeptide is 5-oxoprolinase subunit A (Salmonella paratyphi C (strain RKS4594)).